The chain runs to 549 residues: CTP synthase (549 aa).

Residues 1-272 (MPPKSSTTKH…DAYVVRRMDL (272 aa)) are amidoligase domain. Residue serine 19 coordinates CTP. Serine 19 contributes to the UTP binding site. ATP-binding positions include 20–25 (SLGKGL) and aspartate 77. Mg(2+)-binding residues include aspartate 77 and glutamate 146. Residues 153-155 (DIE), 193-198 (KTKPTQ), and lysine 229 contribute to the CTP site. UTP-binding positions include 193 to 198 (KTKPTQ) and lysine 229. Positions 301 to 548 (VGKYIDLPDA…VKAAVERKTS (248 aa)) constitute a Glutamine amidotransferase type-1 domain. Glycine 360 provides a ligand contact to L-glutamine. Cysteine 387 functions as the Nucleophile; for glutamine hydrolysis in the catalytic mechanism. Residues 388 to 391 (LGLQ), glutamate 411, and arginine 473 each bind L-glutamine. Active-site residues include histidine 521 and glutamate 523.

This sequence belongs to the CTP synthase family. As to quaternary structure, homotetramer.

It catalyses the reaction UTP + L-glutamine + ATP + H2O = CTP + L-glutamate + ADP + phosphate + 2 H(+). The enzyme catalyses L-glutamine + H2O = L-glutamate + NH4(+). The catalysed reaction is UTP + NH4(+) + ATP = CTP + ADP + phosphate + 2 H(+). It participates in pyrimidine metabolism; CTP biosynthesis via de novo pathway; CTP from UDP: step 2/2. Its activity is regulated as follows. Allosterically activated by GTP, when glutamine is the substrate; GTP has no effect on the reaction when ammonia is the substrate. The allosteric effector GTP functions by stabilizing the protein conformation that binds the tetrahedral intermediate(s) formed during glutamine hydrolysis. Inhibited by the product CTP, via allosteric rather than competitive inhibition. In terms of biological role, catalyzes the ATP-dependent amination of UTP to CTP with either L-glutamine or ammonia as the source of nitrogen. Regulates intracellular CTP levels through interactions with the four ribonucleotide triphosphates. In Streptomyces coelicolor (strain ATCC BAA-471 / A3(2) / M145), this protein is CTP synthase.